The following is a 515-amino-acid chain: 2-(3-amino-3-carboxypropyl)histidine synthase subunit 2 (515 aa).

[4Fe-4S] cluster is bound by residues C104, C125, and C353. Residues 493 to 515 (GMDEPSVLEQGRSGVARGYTEEK) form a disordered region.

It belongs to the DPH1/DPH2 family. DPH2 subfamily. As to quaternary structure, component of the 2-(3-amino-3-carboxypropyl)histidine synthase complex composed of DPH1, DPH2, DPH3 and a NADH-dependent reductase, predominantly CBR1. [4Fe-4S] cluster is required as a cofactor.

The protein localises to the cytoplasm. It participates in protein modification; peptidyl-diphthamide biosynthesis. Its function is as follows. Required for the first step of diphthamide biosynthesis, a post-translational modification of histidine which occurs in elongation factor 2. DPH1 and DPH2 transfer a 3-amino-3-carboxypropyl (ACP) group from S-adenosyl-L-methionine (SAM) to a histidine residue, the reaction is assisted by a reduction system comprising DPH3 and a NADH-dependent reductase, predominantly CBR1. Facilitates the reduction of the catalytic iron-sulfur cluster found in the DPH1 subunit. In Cryptococcus neoformans var. neoformans serotype D (strain B-3501A) (Filobasidiella neoformans), this protein is 2-(3-amino-3-carboxypropyl)histidine synthase subunit 2 (DPH2).